The chain runs to 389 residues: 8-amino-7-oxononanoate synthase 2 (389 aa).

Arginine 21 serves as a coordination point for substrate. Pyridoxal 5'-phosphate is bound at residue 108–109 (GY). Histidine 133 serves as a coordination point for substrate. Residues serine 180, 205-208 (DDAH), and 234-237 (TLSK) contribute to the pyridoxal 5'-phosphate site. The residue at position 237 (lysine 237) is an N6-(pyridoxal phosphate)lysine. A substrate-binding site is contributed by threonine 351.

Belongs to the class-II pyridoxal-phosphate-dependent aminotransferase family. BioF subfamily. As to quaternary structure, homodimer. Requires pyridoxal 5'-phosphate as cofactor.

The enzyme catalyses 6-carboxyhexanoyl-[ACP] + L-alanine + H(+) = (8S)-8-amino-7-oxononanoate + holo-[ACP] + CO2. Its pathway is cofactor biosynthesis; biotin biosynthesis. Functionally, catalyzes the decarboxylative condensation of pimeloyl-[acyl-carrier protein] and L-alanine to produce 8-amino-7-oxononanoate (AON), [acyl-carrier protein], and carbon dioxide. The protein is 8-amino-7-oxononanoate synthase 2 (bioF) of Bacillus subtilis (strain 168).